The primary structure comprises 113 residues: Protein translation factor SUI1 homolog (113 aa).

This sequence belongs to the SUI1 family.

Functionally, probably involved in translation. The sequence is that of Protein translation factor SUI1 homolog from Salix bakko (Japanese willow).